We begin with the raw amino-acid sequence, 120 residues long: NAD(P)H-quinone oxidoreductase subunit 3, chloroplastic (120 aa).

3 consecutive transmembrane segments (helical) span residues 10-30 (FWAF…ISGV), 64-84 (MFAL…PWAM), and 88-108 (VLGV…IGGL).

This sequence belongs to the complex I subunit 3 family. In terms of assembly, NDH is composed of at least 16 different subunits, 5 of which are encoded in the nucleus.

Its subcellular location is the plastid. It localises to the chloroplast thylakoid membrane. The catalysed reaction is a plastoquinone + NADH + (n+1) H(+)(in) = a plastoquinol + NAD(+) + n H(+)(out). The enzyme catalyses a plastoquinone + NADPH + (n+1) H(+)(in) = a plastoquinol + NADP(+) + n H(+)(out). In terms of biological role, NDH shuttles electrons from NAD(P)H:plastoquinone, via FMN and iron-sulfur (Fe-S) centers, to quinones in the photosynthetic chain and possibly in a chloroplast respiratory chain. The immediate electron acceptor for the enzyme in this species is believed to be plastoquinone. Couples the redox reaction to proton translocation, and thus conserves the redox energy in a proton gradient. The sequence is that of NAD(P)H-quinone oxidoreductase subunit 3, chloroplastic from Ipomoea purpurea (Common morning glory).